We begin with the raw amino-acid sequence, 405 residues long: Acetylornithine aminotransferase (405 aa).

Residues 107–108 (GA) and F140 each bind pyridoxal 5'-phosphate. R143 is a binding site for N(2)-acetyl-L-ornithine. 225-228 (DEVQ) provides a ligand contact to pyridoxal 5'-phosphate. K254 is modified (N6-(pyridoxal phosphate)lysine). Residue S282 participates in N(2)-acetyl-L-ornithine binding. T283 contacts pyridoxal 5'-phosphate.

Belongs to the class-III pyridoxal-phosphate-dependent aminotransferase family. ArgD subfamily. As to quaternary structure, homodimer. It depends on pyridoxal 5'-phosphate as a cofactor.

The protein localises to the cytoplasm. It catalyses the reaction N(2)-acetyl-L-ornithine + 2-oxoglutarate = N-acetyl-L-glutamate 5-semialdehyde + L-glutamate. The protein operates within amino-acid biosynthesis; L-arginine biosynthesis; N(2)-acetyl-L-ornithine from L-glutamate: step 4/4. This chain is Acetylornithine aminotransferase, found in Shewanella oneidensis (strain ATCC 700550 / JCM 31522 / CIP 106686 / LMG 19005 / NCIMB 14063 / MR-1).